A 34-amino-acid polypeptide reads, in one-letter code: MINWQVIAQLVSLGVIVLVGPAVIILLSLKRGNL.

A helical membrane pass occupies residues 6-26; the sequence is VIAQLVSLGVIVLVGPAVIIL.

The protein belongs to the Psb30/Ycf12 family. In terms of assembly, PSII is composed of 1 copy each of membrane proteins PsbA, PsbB, PsbC, PsbD, PsbE, PsbF, PsbH, PsbI, PsbJ, PsbK, PsbL, PsbM, PsbT, PsbX, PsbY, PsbZ, Psb30/Ycf12, peripheral proteins of the oxygen-evolving complex and a large number of cofactors. It forms dimeric complexes.

The protein localises to the plastid. It localises to the chloroplast thylakoid membrane. In terms of biological role, a core subunit of photosystem II (PSII), probably helps stabilize the reaction center. The protein is Photosystem II reaction center protein Psb30 of Pyropia yezoensis (Susabi-nori).